A 303-amino-acid chain; its full sequence is D-alanine--D-alanine ligase (303 aa).

Residues 100-295 form the ATP-grasp domain; it reads KQLLRRHGIL…FPALIARLIE (196 aa). 127-180 contributes to the ATP binding site; sequence GLGYPLFVKPNTGGSSLCLSRVTQPEGLAPALEAVFAHCGEAIVEPAIPGVEVT. Residues D249, E262, and N264 each contribute to the Mg(2+) site.

Belongs to the D-alanine--D-alanine ligase family. Mg(2+) is required as a cofactor. Mn(2+) serves as cofactor.

The protein resides in the cytoplasm. It carries out the reaction 2 D-alanine + ATP = D-alanyl-D-alanine + ADP + phosphate + H(+). The protein operates within cell wall biogenesis; peptidoglycan biosynthesis. In terms of biological role, cell wall formation. The polypeptide is D-alanine--D-alanine ligase (Nitratidesulfovibrio vulgaris (strain ATCC 29579 / DSM 644 / CCUG 34227 / NCIMB 8303 / VKM B-1760 / Hildenborough) (Desulfovibrio vulgaris)).